A 365-amino-acid polypeptide reads, in one-letter code: DNA N6-methyl methyltransferase (365 aa).

This sequence belongs to the MT-A70-like family.

It catalyses the reaction a 2'-deoxyadenosine in DNA + S-adenosyl-L-methionine = an N(6)-methyl-2'-deoxyadenosine in DNA + S-adenosyl-L-homocysteine + H(+). Its function is as follows. Methylates DNA on the 6th position of adenine (N(6)-methyladenosine). N(6)-methyladenosine (m6A) DNA is involved in epigenetic transgenerational inheritance. This chain is DNA N6-methyl methyltransferase, found in Caenorhabditis elegans.